We begin with the raw amino-acid sequence, 1071 residues long: Kinesin-like protein KIN-14J (1071 aa).

In terms of domain architecture, Calponin-homology (CH) spans 39-142; that stretch reads KKGHQSLVEW…SLKALKASFS (104 aa). Positions 157–181 are disordered; it reads WSLPEDHSDSRGDDRNFTDGFQSKE. Positions 158–173 are enriched in basic and acidic residues; that stretch reads SLPEDHSDSRGDDRNF. A coiled-coil region spans residues 299 to 389; that stretch reads EKTRIEEKER…ELEKLCQSKS (91 aa). In terms of domain architecture, Kinesin motor spans 472-800; the sequence is NIRVYCRIRP…LKFAERVSGV (329 aa). 556–563 provides a ligand contact to ATP; it reads GQTGSGKT. The stretch at 811–844 forms a coiled coil; the sequence is GRDVRQLMEQVSNLKDVIAKKDEELQNFQKVKGN. Disordered stretches follow at residues 852 to 931 and 995 to 1071; these read GLSN…AAKG and ARMT…NRRR. Basic and acidic residues-rich tracts occupy residues 910-921 and 995-1017; these read SDERKHQKDYHQ and ARMTSEKLEKSVKMGKTEPKDRT. The span at 1034–1049 shows a compositional bias: polar residues; sequence TRPSRLSIATSSSSKA.

This sequence belongs to the TRAFAC class myosin-kinesin ATPase superfamily. Kinesin family. KIN-14 subfamily.

The protein is Kinesin-like protein KIN-14J of Arabidopsis thaliana (Mouse-ear cress).